Reading from the N-terminus, the 588-residue chain is Glutathione/L-cysteine transport system ATP-binding/permease protein CydD (588 aa).

Residues 1–15 lie on the Cytoplasmic side of the membrane; sequence MNKSRQKELTRWLKQ. 2 helical membrane-spanning segments follow: residues 16-36 and 37-57; these read QSVI…VSGI and LIIA…MENI. The region spanning 20–306 is the ABC transmembrane type-1 domain; the sequence is SQRWLNISRL…APEFFQPLRD (287 aa). Over 58-136 the chain is Cytoplasmic; that stretch reads PREALLLPFT…LEQIDDMHDY (79 aa). The helical transmembrane segment at 137–157 threads the bilayer; the sequence is YARYLPQMALAVSVPLLIVVA. Residues 158–161 lie on the Periplasmic side of the membrane; sequence IFPS. A helical transmembrane segment spans residues 162-182; that stretch reads NWAAALILLGTAPLIPLFMAL. Residues 183–249 lie on the Cytoplasmic side of the membrane; it reads VGMGAADANR…MEVLRLAFLS (67 aa). The helical transmembrane segment at 250–270 threads the bilayer; it reads SGILEFFTSLSIALVAVYFGF. Residues 271-276 lie on the Periplasmic side of the membrane; sequence SYLGEL. A helical membrane pass occupies residues 277 to 297; sequence DFGHYDTGVTLAAGFLALILA. The Cytoplasmic portion of the chain corresponds to 298-573; the sequence is PEFFQPLRDL…QGRYAELSVA (276 aa). The ABC transporter domain occupies 339–572; sequence EAELASTDPV…EQGRYAELSV (234 aa). An ATP-binding site is contributed by 373–380; the sequence is LPAGQRAV.

Belongs to the ABC transporter superfamily. Cysteine exporter (TC 3.A.1.129.1) family. In terms of assembly, forms a heterodimer with CydC.

The protein resides in the cell inner membrane. It carries out the reaction L-cysteine(in) + ATP + H2O = L-cysteine(out) + ADP + phosphate + H(+). The catalysed reaction is glutathione(in) + ATP + H2O = glutathione(out) + ADP + phosphate + H(+). ATPase activity is stimulated by various thiol compounds. The presence of heme leads to a further enhancement of thiol-stimulated ATPase activity, although a large excess of heme inhibits activity. Glutathione transport is inhibited by sodium orthovanadate, an inhibitor of ABC-type transport systems, but not by the proton ionophore carbonyl cyanide m-chlorophenylhydrazone (CCCP). In terms of biological role, part of the ABC transporter complex CydDC that exports the reduced low-molecular-weight thiols cysteine and glutathione to the periplasm. Export of these thiol-containing redox-active molecules may be crucial for redox homeostasis in the periplasm, permitting correct assembly of various respiratory complexes and formation of correct disulfide bonds in periplasmic and secreted proteins. CydD contains transmembrane domains (TMD), which form a pore in the inner membrane, and an ATP-binding domain (NBD), which is responsible for energy generation. Required for the assembly of functional cytochrome bd-type quinol oxidases and periplasmic c-type cytochromes. Overexpression of CydDC under anaerobic conditions also results in the formation of a heme biosynthesis-derived pigment, P-574. CydDC binds heme b, but heme is probably not transported by the complex and instead has a role in regulating ATPase activity. Its function is as follows. Conversely, a more recent study suggests an alternative function of CydDC: authors suggest that CydDC does not mediate the export of L-cysteine but rather reduces cytoplasmic L-cystine to L-cysteine. The principle function of CydDC would be to maintain the reduced state of cytoplasmic L-cysteine, thereby providing an important connection between sulfur metabolism, oxidative stress and resistance to antibiotics. This is Glutathione/L-cysteine transport system ATP-binding/permease protein CydD from Escherichia coli (strain K12).